A 911-amino-acid polypeptide reads, in one-letter code: DNA ligase 4 (911 aa).

ATP is bound by residues Glu271, Thr272, Lys273, Leu274, Arg278, Glu331, Lys345, Phe367, Glu427, Lys432, Lys449, and Lys451. Lys273 acts as the N6-AMP-lysine intermediate in catalysis. Glu331 serves as a coordination point for Mg(2+). Residue Glu427 participates in Mg(2+) binding. Residues 610 to 620 (LASKHLYIGGD) are required for catalytic activity. 2 consecutive BRCT domains span residues 654–743 (KISN…PRFM) and 808–911 (SPLS…QYLI).

It belongs to the ATP-dependent DNA ligase family. As to quaternary structure, interacts with XRCC4; the LIG4-XRCC4 subcomplex has a 1:2 stoichiometry and XRCC4 is required for LIG4 stability. Component of the core long-range non-homologous end joining (NHEJ) complex (also named DNA-PK complex) composed of PRKDC, LIG4, XRCC4, XRCC6/Ku70, XRCC5/Ku86 and NHEJ1/XLF. Additional component of the NHEJ complex includes PAXX. Following autophosphorylation, PRKDC dissociates from DNA, leading to formation of the short-range NHEJ complex, composed of LIG4, XRCC4, XRCC6/Ku70, XRCC5/Ku86 and NHEJ1/XLF. Interacts with DCLRE1C; the interaction is direct. Interacts with APLF. Mg(2+) serves as cofactor. As to expression, testis, thymus, prostate and heart.

Its subcellular location is the nucleus. The catalysed reaction is ATP + (deoxyribonucleotide)n-3'-hydroxyl + 5'-phospho-(deoxyribonucleotide)m = (deoxyribonucleotide)n+m + AMP + diphosphate.. In terms of biological role, DNA ligase involved in DNA non-homologous end joining (NHEJ); required for double-strand break (DSB) repair and V(D)J recombination. Catalyzes the NHEJ ligation step of the broken DNA during DSB repair by resealing the DNA breaks after the gap filling is completed. Joins single-strand breaks in a double-stranded polydeoxynucleotide in an ATP-dependent reaction. LIG4 is mechanistically flexible: it can ligate nicks as well as compatible DNA overhangs alone, while in the presence of XRCC4, it can ligate ends with 2-nucleotides (nt) microhomology and 1-nt gaps. Forms a subcomplex with XRCC4; the LIG4-XRCC4 subcomplex is responsible for the NHEJ ligation step and XRCC4 enhances the joining activity of LIG4. Binding of the LIG4-XRCC4 complex to DNA ends is dependent on the assembly of the DNA-dependent protein kinase complex DNA-PK to these DNA ends. LIG4 regulates nuclear localization of XRCC4. This is DNA ligase 4 from Homo sapiens (Human).